A 1356-amino-acid polypeptide reads, in one-letter code: MGIEGETVVLKNMLIGVNLILLGSMLKPSECRLEVTTERVQRQTVEEEGGASSYNTSSKEQPMVFNHVYNINVPLESLCSSGLEASAEQDVSAEDDTLAEYTGQTSDHESQVTFTHKINLPKKACPCASSAQVLQELLSRIEMLEREVSVLRDQCNTNCCQESAATGQLDYVPHCSGHGNFSFESCGCICNEGWFGKNCSEPYCPLGCSSRGVCVDGQCICDSEYSGDDCSELRCPTDCSSRGLCVDGECVCEEPYTGEDCRELRCPGDCSGKGQCANGTCLCQEGYAGEDCSQRRCLNACSGRGHCQEGLCICEEGYQGPDCSAVTPPEDLRVAGISDRSIELEWDGPMAVTEYVISYQPSLGGLQLQQRVPGDWSGVTITELEPGLTYNISVYAVISNILSLPITAKVATHLSTPQGLQFKTITETTVEVQWEPFSFSFDGWEISFTPKNNEGGVIAQLPSDVTSFNQTGLKPGEEYIVNVVALKEQARGPPTSASVSTVIDGPTQILVRDVSDTVAFVEWTPPRAKVDFILLKYGLVGGEGGKTTFRLQPPLSQYSVQALRPGSRYEVSISAVRGTNESDASSTQFTTEIDAPKNLRVGSRTATSLDLEWDNSEAEAQEYKVVYSTLAGEQYHEVLVPKGIGPTTKTTLTDLVPGTEYGVGISAVMNSKQSIPATMNARTELDSPRDLMVTASSETSISLIWTKASGPIDHYRITFTPSSGISSEVTVPRDRTSYTLTDLEPGAEYIISITAERGRQQSLESTVDAFTGFRPISHLHFSHVTSSSVNITWSDPSPPADRLILNYSPRDEEEEMMEVLLDATKRHAVLMGLQPATEYIVNLVAVHGTVTSEPIVGSITTGIDPPKNITISNVTKDSLTVSWSPPVAPFDYYEYPIDHPSGRLDSSVVPNTVTEFTITRLYPASQYEISLNSVRGREESERICTLVHTAMDSPMDLIATNITPTEALLQWKAPMGEVENYVIVLTHFAMAGETILVDGVSEEFQLVDLLPRTHYTVTMYATSGPLVSGTIATNFSTLLDPPANLTASEVTRQSALISWQPPRAAIENYVLTYKSTDGSRKELIVDAEDTWIRLEGLSENTDYTVLLQAAQEATRSSLTSTIFTTGGRVFSHPQDCAQHLMNGDTLSGVYTIFLNGELSHKLQVYCDMTTDGGGWIVFQRRQNGQTDFFRKWADYRVGFGNLEDEFWLGLDNYHRITAQGRYELRVDMRDGQEAVFAYYDKFAVEDSRSLYKLRIGGYNGTAGDSLSYHQGRPFSTEDRDNDVAVTNCAMSYKGAWWYKNCHRTNLNGKYGESRHSQGINWYHWKGHEFSIPFVEMKMRPYIHRLTAGRKRRALKF.

Residues 1–31 (MGIEGETVVLKNMLIGVNLILLGSMLKPSEC) form the signal peptide. The N-linked (GlcNAc...) asparagine glycan is linked to Asn55. Residues 127-157 (CASSAQVLQELLSRIEMLEREVSVLRDQCNT) adopt a coiled-coil conformation. Ser176 carries O-linked (Xyl...) (chondroitin sulfate) serine glycosylation. Asn180 and Asn198 each carry an N-linked (GlcNAc...) asparagine glycan. EGF-like domains lie at 188–199 (CICNEGWFGKNC), 204–230 (CPLG…GDDC), and 235–261 (CPTD…GEDC). Residue Ser271 is glycosylated (O-linked (Xyl...) (chondroitin sulfate) serine). An N-linked (GlcNAc...) asparagine glycan is attached at Asn278. 2 EGF-like domains span residues 281-292 (CLCQEGYAGEDC) and 293-324 (SQRR…PDCS). Intrachain disulfides connect Cys297–Cys307 and Cys314–Cys323. Ser302 carries O-linked (Xyl...) (chondroitin sulfate) serine glycosylation. 9 consecutive Fibronectin type-III domains span residues 328-419 (PPED…TPQG), 420-504 (LQFK…TVID), 505-596 (GPTQ…IDAP), 597-686 (KNLR…TELD), 687-776 (SPRD…FRPI), 777-864 (SHLH…TGID), 865-953 (PPKN…AMDS), 954-1040 (PMDL…TLLD), and 1041-1129 (PPAN…GGRV). Asn391, Asn469, and Asn580 each carry an N-linked (GlcNAc...) asparagine glycan. Ser723 is modified (phosphoserine). Asn790, Asn868, Asn873, Asn1034, Asn1044, and Asn1259 each carry an N-linked (GlcNAc...) asparagine glycan. A Fibrinogen C-terminal domain is found at 1127–1342 (GRVFSHPQDC…FVEMKMRPYI (216 aa)).

The protein belongs to the tenascin family. As to quaternary structure, forms oligomers. Interacts with TNC and FN1. Interacts with BCAN and ACAN in a calcium -dependent manner. Interacts with CNTN1, SCN2B, PTPRZ1, and CSPG3. In terms of processing, contains N-linked oligosaccharides, O-linked sialylated structures. Contains O-linked chondroitin sulfate glycosaminoglycans. Contains N-linked oligosaccharides with a sulfated carbohydrate structure type GalNAc-4-SO4 or HNK-1 (SO4-3-GlcUABeta1,3GalBeta1,4GlcNAc). The levels of HNK-1 rise and fall in parallel to those of TNR during postnatal development of the cerebellum. In contrast, levels of GalNAc-4-SO4 are regulated independently from those of TNR, rising late in cerebellar development and continuing into adulthood. Early in postnatal development, GalNAc-4-SO4 is found predominantly on isoform 1, whereas in the adult it is predominantly on isoform 2. Brain-specific. Expressed in oligodendrocytes and small subsets of neurons (mainly interneurons and motoneurons) of the cerebellum, hippocampus and olfactory bulb. Expressed in dorsal root ganglia.

The protein resides in the secreted. It localises to the extracellular space. It is found in the extracellular matrix. Neural extracellular matrix (ECM) protein involved in interactions with different cells and matrix components. Theses interactions can influence cellular behavior by either evoking a stable adhesion and differentiation, or repulsion and inhibition of neurite growth. Binding to cell surface gangliosides inhibits RGD-dependent integrin-mediated cell adhesion and results in an inhibition of PTK2/FAK1 (FAK) phosphorylation and cell detachment. Binding to membrane surface sulfatides results in a oligodendrocyte adhesion and differentiation. Interaction with CNTN1 induces a repulsion of neurons and an inhibition of neurite outgrowth. Interacts with SCN2B may play a crucial role in clustering and regulation of activity of sodium channels at nodes of Ranvier. TNR-linked chondroitin sulfate glycosaminoglycans are involved in the interaction with FN1 and mediates inhibition of cell adhesion and neurite outgrowth. The highly regulated addition of sulfated carbohydrate structure may modulate the adhesive properties of TNR over the course of development and during synapse maintenance. This is Tenascin-R (Tnr) from Rattus norvegicus (Rat).